The following is a 416-amino-acid chain: Enterobactin exporter EntS (416 aa).

The Cytoplasmic portion of the chain corresponds to 1–21 (MNKQSWLLNLSLLKTHPAFRA). The helical transmembrane segment at 22–42 (VFLARFISIVSLGLLGVAVPV) threads the bilayer. The Periplasmic portion of the chain corresponds to 43 to 55 (QIQMMTHSTWQVG). The helical transmembrane segment at 56–76 (LSVTLTGGAMFVGLMVGGVLA) threads the bilayer. The Cytoplasmic segment spans residues 77-83 (DRYERKK). Residues 84–104 (VILLARGTCGIGFIGLCLNAL) traverse the membrane as a helical segment. Residues 105 to 109 (LPEPS) lie on the Periplasmic side of the membrane. A helical transmembrane segment spans residues 110 to 130 (LLAIYLLGLWDGFFASLGVTA). Residues 131 to 156 (LLAATPALVGRENLMQAGAITMLTVR) are Cytoplasmic-facing. Residues 157-177 (LGSVISPMIGGLLLATGGVAW) form a helical membrane-spanning segment. N178 is a topological domain (periplasmic). The helical transmembrane segment at 179-199 (YGLAAAGTFITLLPLLSLPAL) threads the bilayer. Topologically, residues 200 to 218 (PPPPQPREHPLKSLLAGFR) are cytoplasmic. A helical transmembrane segment spans residues 219-239 (FLLASPLVGGIALLGGLLTMA). Residues 240–256 (SAVRVLYPALADNWQMS) are Periplasmic-facing. Residues 257–277 (AAQIGFLYAAIPLGAAIGALT) traverse the membrane as a helical segment. Residues 278–287 (SGKLAHSVRP) are Cytoplasmic-facing. The chain crosses the membrane as a helical span at residues 288–307 (GLLMLLSTLGAFLAISLFGL). At 308–313 (MPMWIL) the chain is on the periplasmic side. Residues 314-336 (GVVCLALFGWLSAVSSLLQYTML) traverse the membrane as a helical segment. The Cytoplasmic segment spans residues 337–356 (QTQTPEAMLGRINGLWTAQN). Residues 357 to 377 (VTGDAIGAALLGGLGAMMTPV) form a helical membrane-spanning segment. Residue A378 is a topological domain, periplasmic. The chain crosses the membrane as a helical span at residues 379-399 (SASASGFGLLIIGVLLLLVLV). At 400–416 (ELRRFRQTPPQVTASDS) the chain is on the cytoplasmic side.

Belongs to the major facilitator superfamily. EntS (TC 2.A.1.38) family.

Its subcellular location is the cell inner membrane. Functionally, component of an export pathway for enterobactin. The protein is Enterobactin exporter EntS of Escherichia coli O45:K1 (strain S88 / ExPEC).